The following is a 171-amino-acid chain: Siroheme decarboxylase NirH subunit (171 aa).

The protein belongs to the Ahb/Nir family. As to quaternary structure, probably forms a complex composed of NirD, NirL, NirG and NirH. All proteins are required for the total conversion of siroheme to didecarboxysiroheme.

It carries out the reaction siroheme + 2 H(+) = 12,18-didecarboxysiroheme + 2 CO2. Its pathway is porphyrin-containing compound metabolism. Its function is as follows. Involved in heme d1 biosynthesis. Catalyzes the decarboxylation of siroheme into didecarboxysiroheme. This chain is Siroheme decarboxylase NirH subunit, found in Pseudomonas aeruginosa (strain ATCC 15692 / DSM 22644 / CIP 104116 / JCM 14847 / LMG 12228 / 1C / PRS 101 / PAO1).